The following is a 133-amino-acid chain: MSKLNKSIVAEFESAQITRELPKFSQGDTVVVNVKVKEGARERVQAYEGVVIATKNGGLNSSFTVRKISHGYGVERVFQTHSAIIDSVEVKRRGKVRAGKLYYLRGLEGKAARIKEDLAAAAAAKAARLAEKA.

Belongs to the bacterial ribosomal protein bL19 family.

Functionally, this protein is located at the 30S-50S ribosomal subunit interface and may play a role in the structure and function of the aminoacyl-tRNA binding site. In Stenotrophomonas maltophilia (strain R551-3), this protein is Large ribosomal subunit protein bL19.